A 276-amino-acid polypeptide reads, in one-letter code: Large ribosomal subunit protein uL2 (276 aa).

Disordered regions lie at residues 38–59 (FQKS…GGHK) and 225–276 (VMNP…RHKR). Positions 39–49 (QKSGRNNNGHI) are enriched in polar residues. The span at 50–59 (TTRHKGGGHK) shows a compositional bias: basic residues.

It belongs to the universal ribosomal protein uL2 family. In terms of assembly, part of the 50S ribosomal subunit. Forms a bridge to the 30S subunit in the 70S ribosome.

Its function is as follows. One of the primary rRNA binding proteins. Required for association of the 30S and 50S subunits to form the 70S ribosome, for tRNA binding and peptide bond formation. It has been suggested to have peptidyltransferase activity; this is somewhat controversial. Makes several contacts with the 16S rRNA in the 70S ribosome. The protein is Large ribosomal subunit protein uL2 of Cupriavidus necator (strain ATCC 17699 / DSM 428 / KCTC 22496 / NCIMB 10442 / H16 / Stanier 337) (Ralstonia eutropha).